The following is a 132-amino-acid chain: Large ribosomal subunit protein uL14 (132 aa).

This sequence belongs to the universal ribosomal protein uL14 family. In terms of assembly, part of the 50S ribosomal subunit. Forms a cluster with proteins L3 and L24e, part of which may contact the 16S rRNA in 2 intersubunit bridges.

Binds to 23S rRNA. Forms part of two intersubunit bridges in the 70S ribosome. This chain is Large ribosomal subunit protein uL14, found in Methanococcus vannielii.